The sequence spans 121 residues: Protein ripply2.1 (121 aa).

A disordered region spans residues 1–69; it reads MEPNQQRSCG…DKGKPPSFQH (69 aa). Residues 29–32 carry the WRPW motif motif; that stretch reads WRPW. Over residues 39–57 the composition is skewed to polar residues; that stretch reads HVQNPPTAQQQFYSDNQSH. Residues 69–104 are ripply homology domain; that stretch reads HPVKLFWPKSRCYDFMYQEAEELLRHFPVQATISLY.

This sequence belongs to the ripply family. As to expression, expressed in the presomitic mesoderm (PSM) in the anterior halves of somitomeres S-0, S-I and S-II and in the newly formed somites.

The protein resides in the nucleus. Functionally, required during somitogenesis to regulate somite differentiation and the positioning of the presomitic mesoderm-front. Represses the expression of genes involved in somite segmentation by acting with the corepressor tle4 to down-regulate the transcriptional activity of tbx6. Also regulates retinoic acid signaling during somitogenesis and is necessary for the expression of aldh1a2/raldh2. The polypeptide is Protein ripply2.1 (ripply2.1) (Xenopus laevis (African clawed frog)).